A 353-amino-acid chain; its full sequence is Phosphate acyltransferase (353 aa).

Belongs to the PlsX family. As to quaternary structure, homodimer. Probably interacts with PlsY.

It is found in the cytoplasm. It catalyses the reaction a fatty acyl-[ACP] + phosphate = an acyl phosphate + holo-[ACP]. Its pathway is lipid metabolism; phospholipid metabolism. Catalyzes the reversible formation of acyl-phosphate (acyl-PO(4)) from acyl-[acyl-carrier-protein] (acyl-ACP). This enzyme utilizes acyl-ACP as fatty acyl donor, but not acyl-CoA. This is Phosphate acyltransferase from Rhodopseudomonas palustris (strain ATCC BAA-98 / CGA009).